A 320-amino-acid polypeptide reads, in one-letter code: Cytochrome f (320 aa).

The first 35 residues, 1-35, serve as a signal peptide directing secretion; sequence MQTRNTFSWIREEITRSISVLLMIYIITWASISSA. Residues Tyr36, Cys56, Cys59, and His60 each coordinate heme. Residues 286-306 form a helical membrane-spanning segment; sequence VQGLLFFLGSVVLAQIFLVLK.

Belongs to the cytochrome f family. As to quaternary structure, the 4 large subunits of the cytochrome b6-f complex are cytochrome b6, subunit IV (17 kDa polypeptide, petD), cytochrome f and the Rieske protein, while the 4 small subunits are PetG, PetL, PetM and PetN. The complex functions as a dimer. Heme serves as cofactor.

The protein localises to the plastid. Its subcellular location is the chloroplast thylakoid membrane. Its function is as follows. Component of the cytochrome b6-f complex, which mediates electron transfer between photosystem II (PSII) and photosystem I (PSI), cyclic electron flow around PSI, and state transitions. The protein is Cytochrome f of Lobularia maritima (Sweet alyssum).